The primary structure comprises 141 residues: Fluoride-specific ion channel FluC 1 (141 aa).

The next 4 membrane-spanning stretches (helical) occupy residues 12–32, 44–64, 79–99, and 107–127; these read LYAL…LVGV, WATL…AAIA, FVMT…LETF, and ALAA…AVWL. Na(+)-binding residues include Gly86 and Thr89.

It belongs to the fluoride channel Fluc/FEX (TC 1.A.43) family.

It localises to the cell inner membrane. It carries out the reaction fluoride(in) = fluoride(out). With respect to regulation, na(+) is not transported, but it plays an essential structural role and its presence is essential for fluoride channel function. In terms of biological role, fluoride-specific ion channel. Important for reducing fluoride concentration in the cell, thus reducing its toxicity. The polypeptide is Fluoride-specific ion channel FluC 1 (Rhodopseudomonas palustris (strain BisB18)).